Consider the following 83-residue polypeptide: Alpha-elapitoxin-Ppr1 (83 aa).

A signal peptide spans 1-21; sequence MKTLLLTLVVVTIVCLDLGYT. Disulfide bonds link Cys-24/Cys-45, Cys-38/Cys-62, Cys-64/Cys-75, and Cys-76/Cys-81.

The protein belongs to the three-finger toxin family. Short-chain subfamily. Type I alpha-neurotoxin sub-subfamily. In terms of tissue distribution, expressed by the venom gland.

Its subcellular location is the secreted. Its function is as follows. Bird-specific neurotoxin (tested on chicken) that acts as a pseudo-irreversible antagonist at the nicotinic acetylcholine receptor (nAChR) of the skeletal neuromuscular junction. Has no significant effect on the electrically-induced twitches of the rat isolated phrenic nerve-diaphragm preparation. In Pseudechis porphyriacus (Red-bellied black snake), this protein is Alpha-elapitoxin-Ppr1.